The primary structure comprises 288 residues: MSAKIIDGKRLSQEVRAECRARAARLAEKGTQPGLAVVIVGDNPASRVYVRNKAKACGETGIYSEVHEFPENANQDEVIGRIQELNGNPGIHGILVQLPLPRHFDSSRVTESVAVEKDVDGFHLYNVGALVTGSSIFPPCTPNGVMKMLEKYDIPIEGQHAVIVGRSNIVGKPMALMLLQKGATVTICTSRTRNLAEHTSRADILIVAAGKPRLITAMMVKPGATVIDVGINRLSDGKLAGDVDFESVKEKAGYITPVPGGVGPMTIAMLLCNTVVAAEQAHARLQGN.

Residues 165 to 167 (GRS), Ser190, and Ile231 each bind NADP(+).

This sequence belongs to the tetrahydrofolate dehydrogenase/cyclohydrolase family. In terms of assembly, homodimer.

The catalysed reaction is (6R)-5,10-methylene-5,6,7,8-tetrahydrofolate + NADP(+) = (6R)-5,10-methenyltetrahydrofolate + NADPH. The enzyme catalyses (6R)-5,10-methenyltetrahydrofolate + H2O = (6R)-10-formyltetrahydrofolate + H(+). It participates in one-carbon metabolism; tetrahydrofolate interconversion. Catalyzes the oxidation of 5,10-methylenetetrahydrofolate to 5,10-methenyltetrahydrofolate and then the hydrolysis of 5,10-methenyltetrahydrofolate to 10-formyltetrahydrofolate. The chain is Bifunctional protein FolD from Nitrosospira multiformis (strain ATCC 25196 / NCIMB 11849 / C 71).